The following is a 495-amino-acid chain: Bifunctional protein GlmU (495 aa).

A pyrophosphorylase region spans residues M1–R241. UDP-N-acetyl-alpha-D-glucosamine is bound by residues L12 to G15, K26, Q83, G88 to T89, S112 to D114, G151, E166, N181, and N239. Position 114 (D114) interacts with Mg(2+). N239 lines the Mg(2+) pocket. The tract at residues V242–A262 is linker. Residues G263 to P495 are N-acetyltransferase. Residues R344 and K362 each contribute to the UDP-N-acetyl-alpha-D-glucosamine site. The Proton acceptor role is filled by H374. 2 residues coordinate UDP-N-acetyl-alpha-D-glucosamine: Y377 and N388. Acetyl-CoA contacts are provided by residues A391, N397–Y398, S416, and A434. A disordered region spans residues I457 to P495. A compositionally biased stretch (low complexity) spans Q483–P495.

In the N-terminal section; belongs to the N-acetylglucosamine-1-phosphate uridyltransferase family. This sequence in the C-terminal section; belongs to the transferase hexapeptide repeat family. Homotrimer. Requires Mg(2+) as cofactor.

It localises to the cytoplasm. It catalyses the reaction alpha-D-glucosamine 1-phosphate + acetyl-CoA = N-acetyl-alpha-D-glucosamine 1-phosphate + CoA + H(+). The enzyme catalyses N-acetyl-alpha-D-glucosamine 1-phosphate + UTP + H(+) = UDP-N-acetyl-alpha-D-glucosamine + diphosphate. The protein operates within nucleotide-sugar biosynthesis; UDP-N-acetyl-alpha-D-glucosamine biosynthesis; N-acetyl-alpha-D-glucosamine 1-phosphate from alpha-D-glucosamine 6-phosphate (route II): step 2/2. Its pathway is nucleotide-sugar biosynthesis; UDP-N-acetyl-alpha-D-glucosamine biosynthesis; UDP-N-acetyl-alpha-D-glucosamine from N-acetyl-alpha-D-glucosamine 1-phosphate: step 1/1. It functions in the pathway bacterial outer membrane biogenesis; LPS lipid A biosynthesis. Its function is as follows. Catalyzes the last two sequential reactions in the de novo biosynthetic pathway for UDP-N-acetylglucosamine (UDP-GlcNAc). The C-terminal domain catalyzes the transfer of acetyl group from acetyl coenzyme A to glucosamine-1-phosphate (GlcN-1-P) to produce N-acetylglucosamine-1-phosphate (GlcNAc-1-P), which is converted into UDP-GlcNAc by the transfer of uridine 5-monophosphate (from uridine 5-triphosphate), a reaction catalyzed by the N-terminal domain. The protein is Bifunctional protein GlmU of Mycobacterium bovis (strain ATCC BAA-935 / AF2122/97).